Here is a 360-residue protein sequence, read N- to C-terminus: Putative F-box protein At5g55150 (360 aa).

The region spanning Ser6–Pro54 is the F-box domain.

The chain is Putative F-box protein At5g55150 from Arabidopsis thaliana (Mouse-ear cress).